The following is a 284-amino-acid chain: Ribosomal RNA small subunit methyltransferase A (284 aa).

S-adenosyl-L-methionine is bound by residues His23, Leu25, Gly50, Glu71, Asp92, and Asn121.

Belongs to the class I-like SAM-binding methyltransferase superfamily. rRNA adenine N(6)-methyltransferase family. RsmA subfamily.

The protein resides in the cytoplasm. The enzyme catalyses adenosine(1518)/adenosine(1519) in 16S rRNA + 4 S-adenosyl-L-methionine = N(6)-dimethyladenosine(1518)/N(6)-dimethyladenosine(1519) in 16S rRNA + 4 S-adenosyl-L-homocysteine + 4 H(+). Specifically dimethylates two adjacent adenosines (A1518 and A1519) in the loop of a conserved hairpin near the 3'-end of 16S rRNA in the 30S particle. May play a critical role in biogenesis of 30S subunits. The polypeptide is Ribosomal RNA small subunit methyltransferase A (Verminephrobacter eiseniae (strain EF01-2)).